Here is a 71-residue protein sequence, read N- to C-terminus: Protein SlyX homolog (71 aa).

It belongs to the SlyX family.

The sequence is that of Protein SlyX homolog from Rhodopseudomonas palustris (strain BisB5).